Reading from the N-terminus, the 506-residue chain is Exopolysaccharide phosphotransferase NFA_48680 (506 aa).

Positions 484–506 (PAPWERVSAPSRRPLPESTAGAA) are disordered.

Belongs to the stealth family.

This Nocardia farcinica (strain IFM 10152) protein is Exopolysaccharide phosphotransferase NFA_48680.